Consider the following 209-residue polypeptide: Dephospho-CoA kinase (209 aa).

The DPCK domain occupies 13 to 209 (RIGLTGGIAT…AIEKVVVAEN (197 aa)). Residue 21 to 26 (ATGKST) coordinates ATP.

It belongs to the CoaE family.

It is found in the cytoplasm. It carries out the reaction 3'-dephospho-CoA + ATP = ADP + CoA + H(+). Its pathway is cofactor biosynthesis; coenzyme A biosynthesis; CoA from (R)-pantothenate: step 5/5. Its function is as follows. Catalyzes the phosphorylation of the 3'-hydroxyl group of dephosphocoenzyme A to form coenzyme A. This is Dephospho-CoA kinase from Synechococcus elongatus (strain ATCC 33912 / PCC 7942 / FACHB-805) (Anacystis nidulans R2).